Consider the following 178-residue polypeptide: Probable chorismate pyruvate-lyase (178 aa).

The substrate site is built by Arg-73, Leu-111, and Glu-163.

This sequence belongs to the UbiC family.

The protein resides in the cytoplasm. The enzyme catalyses chorismate = 4-hydroxybenzoate + pyruvate. Its pathway is cofactor biosynthesis; ubiquinone biosynthesis. Its function is as follows. Removes the pyruvyl group from chorismate, with concomitant aromatization of the ring, to provide 4-hydroxybenzoate (4HB) for the ubiquinone pathway. The chain is Probable chorismate pyruvate-lyase from Pseudomonas aeruginosa (strain UCBPP-PA14).